We begin with the raw amino-acid sequence, 487 residues long: MKPSTEWWRYLAPLAVIAIIALLPLPAGLESHTWLYFAVFTGVIVGLILEPVPGAVVAMVGISIIAILSPWLLFSPEQLAQPGFKFTAKSLSWAVSGFSNSVIWLIFAAFMFGTGYEKTGLGRRIALILVKKMGHRTLFLGYAVMFSELILAPVTPSNSARGAGIIYPIIRNLPPLYQSQPNDSSSRSIGSYIMWMGIVADCVTSAIFLTAMAPNLLLIGLMKSASNATLSWGDWFLGMLPLSILLVLLVPWLAYVLYPPILKSGDQVPRWAETELQAMGPLCSREKRMLGLMVGALVLWIFGGDYIDAAMVGYSVVALMLLLRIICWDDIVSNKAAWNVFFWLASLITLATGLNNTGFISWFGKLLAGSLSGYSPTIVMVALIVVFYLLRYFFASATAYTSALAPMMIAAALAMPEIPLPVFCLMVGAAIGLGSILTPYATGPSPIYYGSGYLPTVDYWRLGAIFGLIFLVLLVITGLLWMPMVLL.

Transmembrane regions (helical) follow at residues 10–30, 33–53, 54–74, 93–113, 137–157, 189–209, 236–256, 292–312, 313–333, 340–360, 370–390, 393–413, 418–438, and 462–482; these read YLAP…AGLE, TWLY…EPVP, GAVV…WLLF, WAVS…FMFG, TLFL…VTPS, IGSY…AIFL, FLGM…LAYV, LMVG…AAMV, GYSV…DIVS, VFFW…TGFI, SLSG…FYLL, FFAS…AAAL, IPLP…SILT, and LGAI…LLWM.

It belongs to the SLC13A/DASS transporter (TC 2.A.47) family. DIT1 subfamily.

The protein localises to the cell inner membrane. The enzyme catalyses (2R,3R)-tartrate(out) + succinate(in) = (2R,3R)-tartrate(in) + succinate(out). In terms of biological role, catalyzes the uptake of tartrate in exchange for intracellular succinate. Essential for anaerobic L-tartrate fermentation. The protein is L-tartrate/succinate antiporter (ttdT) of Escherichia coli O6:H1 (strain CFT073 / ATCC 700928 / UPEC).